We begin with the raw amino-acid sequence, 1215 residues long: Metabotropic glycine receptor (1215 aa).

An N-terminal signal peptide occupies residues Met-1 to Gly-23. The disordered stretch occupies residues Gly-23 to Asp-66. Topologically, residues Ala-24–Arg-417 are extracellular. The segment covering Pro-28–Pro-40 has biased composition (basic and acidic residues). Low complexity predominate over residues Ala-52–Ser-64. Positions Tyr-85–Trp-281 are cache-like region. Asn-98 and Asn-143 each carry an N-linked (GlcNAc...) asparagine glycan. A disulfide bridge links Cys-99 with Cys-272. Glycine-binding residues include Ser-172 and Arg-173. The N-linked (GlcNAc...) asparagine glycan is linked to Asn-215. Glu-271 serves as a coordination point for glycine. An N-linked (GlcNAc...) asparagine glycan is attached at Asn-274. Asp-307 serves as a coordination point for glycine. An N-linked (GlcNAc...) asparagine glycan is attached at Asn-333. The chain crosses the membrane as a helical span at residues Leu-418–Tyr-439. The Cytoplasmic portion of the chain corresponds to His-440–Gly-451. The helical transmembrane segment at Leu-452–Phe-474 threads the bilayer. Over Glu-475–Thr-478 the chain is Extracellular. The helical transmembrane segment at Phe-479–Leu-501 threads the bilayer. The cysteines at positions 481 and 573 are disulfide-linked. The Cytoplasmic segment spans residues Lys-502–Arg-525. The helical transmembrane segment at Val-526 to Ser-547 threads the bilayer. Residues Val-548–Asp-576 lie on the Extracellular side of the membrane. Residues Arg-577–Cys-597 traverse the membrane as a helical segment. The Cytoplasmic segment spans residues Tyr-598–Arg-611. The helical transmembrane segment at Tyr-612–Val-633 threads the bilayer. The Extracellular portion of the chain corresponds to Leu-634–Trp-642. Residues Met-643–Ile-664 traverse the membrane as a helical segment. At Pro-665 to Val-1215 the chain is on the cytoplasmic side. Ser-694, Ser-705, and Ser-708 each carry phosphoserine. Positions Arg-757–Asp-999 are disordered. 2 stretches are compositionally biased toward basic and acidic residues: residues Cys-769–Thr-781 and Ser-819–Thr-828. Lys-774 is covalently cross-linked (Glycyl lysine isopeptide (Lys-Gly) (interchain with G-Cter in ubiquitin)). Residue Ser-865 is modified to Phosphoserine. Over residues Val-925 to Arg-943 the composition is skewed to basic and acidic residues. The residue at position 946 (Ser-946) is a Phosphoserine. The span at Gln-979–Lys-998 shows a compositional bias: polar residues. Short sequence motifs (VCPWE motif) lie at residues Val-1006–Glu-1010 and Val-1071–Glu-1075. A Phosphoserine modification is found at Ser-1080. The interval Ser-1117–Pro-1164 is disordered. The span at His-1139–Val-1151 shows a compositional bias: basic and acidic residues. Over residues Gly-1153–Pro-1164 the composition is skewed to polar residues. Positions Val-1171–Glu-1175 match the VCPWE motif 3 motif.

The protein belongs to the G-protein coupled receptor 3 family. As to quaternary structure, homodimer. Associates with the RGS7-GNB5 complex, promoting its localization to the cell membrane and regulating its GTPase activator activity. Interacts (via VCPWE motifs) with GNAO1. Interacts with GPC4. Interacts with EGFLAM.

Its subcellular location is the cell membrane. The protein localises to the postsynaptic cell membrane. It is found in the presynaptic cell membrane. It localises to the nucleus. Its function is as follows. Metabotropic receptor for glycine that controls synapse formation and function in the brain. Acts as an atypical G-protein coupled receptor that recruits and regulates the RGS7-GNB5 complex instead of activating G proteins. In absence of glycine ligand, promotes the GTPase activator activity of RGS7, increasing the GTPase activity of G protein alpha subunits, thereby driving them into their inactive GDP-bound form. Glycine-binding changes the conformation of the intracellular surface, inhibiting the GTPase activator activity of the RGS7-GNB5 complex, promoting G protein alpha subunits into their active GTP-bound form and regulating cAMP levels. Also able to bind taurine, a compound closely related to glycine, but with a two-fold lower affinity. Glycine receptor-dependent regulation of cAMP controls key ion channels, kinases and neurotrophic factors involved in neuronal excitability and synaptic transmission. Plays a pivotal role in regulating mood and cognition via its ability to regulate neuronal excitability in L2/L3 pyramidal neurons of the prefrontal cortex. Also involved in spatial learning by regulating hippocampal CA1 neuronal excitability. Acts as a synaptic organizer in the hippocampus, required for proper mossy fiber-CA3 neurocircuitry establishment, structure and function: induces presynaptic differentiation in contacting axons via its interaction with GPC4. In addition to glycine, may also act as a receptor for osteocalcin (BGLAP) hormone: osteocalcin-binding initiates a signaling response that prevents neuronal apoptosis in the hippocampus and regulates the synthesis of neurotransmitters. In Homo sapiens (Human), this protein is Metabotropic glycine receptor.